Consider the following 1892-residue polypeptide: Sodium channel protein type 4 subunit alpha A (1892 aa).

At 1–125 (MATILPPPGT…RGAIKILIHS (125 aa)) the chain is on the cytoplasmic side. A disordered region spans residues 34-54 (APKAGAHEEEEPPTPNPDLEA). The I repeat unit spans residues 107–433 (ILSPFSLVRR…VVAMAYDEQN (327 aa)). The helical transmembrane segment at 126–144 (LFSTLIMITILSNCVFMTM) threads the bilayer. The Extracellular segment spans residues 145 to 151 (SNPPAWS). Residues 152 to 172 (KTVEYVFTGIYTFEATVKVLS) form a helical membrane-spanning segment. Over 173 to 186 (RGFCVGPFTFLRDP) the chain is Cytoplasmic. The helical transmembrane segment at 187 to 204 (WNWLDFMVISMAYITEFV) threads the bilayer. At 205 to 210 (DLGNVS) the chain is on the extracellular side. N208 carries N-linked (GlcNAc...) asparagine glycosylation. Residues 211-227 (ALRTFRVLRALKTITVI) traverse the membrane as a helical segment. The Cytoplasmic segment spans residues 228-246 (PGLKTIVAALIQSVKKMVD). Residues 247–266 (VMILTVFALAVFALVGLQLF) form a helical membrane-spanning segment. The Extracellular segment spans residues 267–370 (MGNLRHKCIR…PNYGYTSFDS (104 aa)). Cysteines 274 and 339 form a disulfide. N-linked (GlcNAc...) asparagine glycosylation is found at N281, N294, and N341. Residues C348 and C354 are joined by a disulfide bond. Positions 371–395 (FGWAFLALFRLMTQDNWESLFQLTL) form an intramembrane region, pore-forming. The Extracellular segment spans residues 396 to 402 (RAAGQTY). A helical transmembrane segment spans residues 403–423 (MLFFVVVIFLGSFYLINLILA). The Cytoplasmic segment spans residues 424–612 (VVAMAYDEQN…KWVHFVVMDP (189 aa)). The stretch at 594-866 (CCEKWVVFKK…QIAIGRITRG (273 aa)) is one II repeat. The chain crosses the membrane as a helical span at residues 613–631 (FVDLAITICIVLNTLFMAM). At 632–642 (EHYPMTEEFDY) the chain is on the extracellular side. A helical membrane pass occupies residues 643–662 (MLSVGNLVFTGIFAAEMFFK). The Cytoplasmic portion of the chain corresponds to 663-676 (LIAMDPYYYFQVGW). A helical membrane pass occupies residues 677–696 (NIFDSIIVTLSLVELGLANV). Topologically, residues 697-698 (QG) are extracellular. A helical transmembrane segment spans residues 699–716 (LSVLRSFRLLRVFKLAKS). The Cytoplasmic segment spans residues 717–732 (WPTLNMLIKIIGNSVG). The helical transmembrane segment at 733-751 (ALGNLTLVLAIIVFIFAVV) threads the bilayer. Over 752 to 780 (GMQLFGKSYKDCVCKISSDCELPRWHMND) the chain is Extracellular. Cysteines 765 and 771 form a disulfide. An intramembrane region (pore-forming) is located at residues 781–801 (FFHSFLIVFRILCGEWIETMW). Residues 802 to 812 (DCMEVAGAGMC) lie on the Extracellular side of the membrane. The cysteines at positions 803 and 812 are disulfide-linked. The chain crosses the membrane as a helical span at residues 813-831 (LVVFMMVMVIGNLVVLNLF). Residues 832–1071 (LALLLSSFSG…TCFTIVEHDW (240 aa)) are Cytoplasmic-facing. Disordered stretches follow at residues 884 to 905 (REPQKPAEEDPADEGEGKTEGM) and 945 to 982 (LGESDSENPSEDDDDQEDDVDSEVTCEENEHHSDGVED). Over residues 948–971 (SDSENPSEDDDDQEDDVDSEVTCE) the composition is skewed to acidic residues. An III repeat occupies 1052–1366 (KGKKWWNLRK…KKYYEAMKKL (315 aa)). Residues 1072-1089 (FETFIIFMILLSSGALAF) traverse the membrane as a helical segment. The Extracellular segment spans residues 1090–1102 (EDIYIERRRTVKI). Residues 1103-1121 (VLEFADKVFTFIFVIEMLL) form a helical membrane-spanning segment. The Cytoplasmic segment spans residues 1122–1135 (KWVAYGFKTYFTNA). Residues 1136 to 1154 (WCWLDFFIVDISLISLSAN) traverse the membrane as a helical segment. The Extracellular portion of the chain corresponds to 1155–1162 (LMGFSDLG). A helical membrane pass occupies residues 1163–1181 (PIKSLRTLRALRPLRALSR). The Cytoplasmic segment spans residues 1182 to 1198 (FEGMRVVVNALIGAIPS). The chain crosses the membrane as a helical span at residues 1199–1218 (IFNVLLVCLIFWLIFSIMGV). Over 1219 to 1270 (NLFAGKFYRCINTTTAELFPISVVNNKSDCVALQEATQEARWVNVKVNYDNV) the chain is Extracellular. A disulfide bridge connects residues C1228 and C1248. Residues N1230 and N1244 are each glycosylated (N-linked (GlcNAc...) asparagine). An intramembrane region (pore-forming) is located at residues 1271-1292 (AKGYLSLLQIATFKGWMDIMYP). The Extracellular segment spans residues 1293-1309 (AVDSREVEEQPSYEINL). The helical transmembrane segment at 1310 to 1331 (YMYIYFVIFIIFGSFFTLNLFI) threads the bilayer. Residues 1332-1394 (GVIIDNFNQQ…LVFDFISQQF (63 aa)) lie on the Cytoplasmic side of the membrane. Positions 1350-1352 (IFM) are important for rapid channel inactivation. An IV repeat occupies 1375 to 1673 (IPRPANLIQG…WEKFDTGGTQ (299 aa)). A helical transmembrane segment spans residues 1395 to 1412 (FDIFIMVLICLNMVTMMV). Residues 1413-1423 (ETDDQSPAKED) lie on the Extracellular side of the membrane. The chain crosses the membrane as a helical span at residues 1424 to 1442 (FLFKVNVAFIVVFTGECTL). Residues 1443-1454 (KLFALRHYFFTN) are Cytoplasmic-facing. Residues 1455–1472 (GWNIFDFIVVILSIAGTM) traverse the membrane as a helical segment. The Extracellular segment spans residues 1473 to 1485 (LSDIIEKYFVSPT). Residues 1486 to 1502 (LFRVIRLARIGRILRLI) form a helical membrane-spanning segment. At 1503 to 1521 (KGARGIRTLLFALMMSLPA) the chain is on the cytoplasmic side. The helical transmembrane segment at 1522 to 1539 (LFNIGLLLFLIMFIFSIF) threads the bilayer. The Extracellular portion of the chain corresponds to 1540–1561 (GMSNFAYVKKEAGINDMFNFET). Residues 1562–1584 (FGSSIICLFQITTSAGWDTLLLP) constitute an intramembrane region (pore-forming). Over 1585 to 1614 (MLNKEPPDCDPAFENPGTDVKGNCGNPMMG) the chain is Extracellular. The cysteines at positions 1593 and 1608 are disulfide-linked. A helical transmembrane segment spans residues 1615–1637 (MVFFCSYIIISFLVVVNMYIAII). Residues 1638–1892 (LENFNVAQEE…TQTILRETNV (255 aa)) lie on the Cytoplasmic side of the membrane. The region spanning 1767-1796 (EDMAAVVIQRAYRNHLHKRGIHHAAYIQRS) is the IQ domain. The segment at 1836 to 1856 (RRRPDPQTRCSGARCSPEPPE) is disordered.

The protein belongs to the sodium channel (TC 1.A.1.10) family. Nav1.4/SCN4A subfamily. In terms of assembly, voltage-gated sodium (Nav) channels consist of an ion-conducting alpha subunit which is functional on its own associated with regulatory beta subunits.

It localises to the cell membrane. It carries out the reaction Na(+)(in) = Na(+)(out). Functionally, pore-forming subunit of a voltage-gated sodium (Nav) channel that directly mediates the depolarizing phase of action potentials in excitable membranes. Navs, also called VGSCs (voltage-gated sodium channels) or VDSCs (voltage-dependent sodium channels), operate by switching between closed and open conformations depending on the voltage difference across the membrane. In the open conformation they allow Na(+) ions to selectively pass through the pore, along their electrochemical gradient. The influx of Na+ ions provokes membrane depolarization, initiating the propagation of electrical signals throughout cells and tissues. The sequence is that of Sodium channel protein type 4 subunit alpha A (scn4aa) from Takifugu rubripes (Japanese pufferfish).